Reading from the N-terminus, the 771-residue chain is Metal transporter CNNM4 (771 aa).

Topologically, residues 1-175 (MAPGGGGGRR…LLFMVEEHGR (175 aa)) are extracellular. Residue N119 is glycosylated (N-linked (GlcNAc...) asparagine). The CNNM transmembrane domain maps to 175–355 (RFLPLWLHIL…EPYNDLVKEE (181 aa)). The helical transmembrane segment at 176-196 (FLPLWLHILLVMVLLVLSGIF) threads the bilayer. Residues 197-237 (SGLNLGLMALDPMELRIVQNCGTEKERKYARKIEPIRRKGN) lie on the Cytoplasmic side of the membrane. Positions 238–258 (YLLCSLLLGNVLVNTSLTILL) form an intramembrane region, helical. The Cytoplasmic segment spans residues 259–261 (DNL). A helical membrane pass occupies residues 262–282 (IGSGIMAVASSTIGIVIFGEI). Over 283-290 (LPQALCSR) the chain is Extracellular. A helical transmembrane segment spans residues 291–313 (HGLAVGANTIVLTKVFMLLTFPL). Residues 314–771 (SFPISKLLDF…LHRASEEETI (458 aa)) are Cytoplasmic-facing. CBS domains follow at residues 374-435 (MTQL…CTPL) and 442-508 (YNHP…ILDE). Phosphoserine occurs at positions 657, 661, and 766.

Belongs to the ACDP family. As to quaternary structure, interacts with COX11. In terms of tissue distribution, cornea, retina, teeth (at protein level). In the retina it is predominantly localized to the outer plexiform layer, inner plexiform layer and ganglion cell layer. In the tooth strongest expression is observed in the cell body of the ameloblasts. Expressed at high levels in the gastrointestinal tract and testis.

It localises to the cell membrane. Probable metal transporter. The interaction with the metal ion chaperone COX11 suggests that it may play a role in sensory neuron functions. May play a role in biomineralization and retinal function. The chain is Metal transporter CNNM4 (Cnnm4) from Mus musculus (Mouse).